The chain runs to 448 residues: Rhodanese-like domain-containing protein 8, chloroplastic (448 aa).

Residues 1–23 (MRVSPAATLSVSLTTPLPITLTK) constitute a chloroplast transit peptide. The 104-residue stretch at 220 to 323 (SGKSYILLDV…YLKEEGTAEW (104 aa)) folds into the Rhodanese domain. The active-site Cysteine persulfide intermediate is Cys283.

It is found in the plastid. It localises to the chloroplast. This Arabidopsis thaliana (Mouse-ear cress) protein is Rhodanese-like domain-containing protein 8, chloroplastic (STR8).